Consider the following 21-residue polypeptide: Nigrocin-2JDa (21 aa).

A disulfide bond links Cys15 and Cys21.

As to expression, expressed by the skin glands.

It is found in the secreted. Has antibacterial activity against E.coli ATCC 25992 (MIC=16 uM), E.coli CIB 84492 (MIC=16 uM), S.aureus ATCC 25923 (MIC=16 uM) and S.aureus CIB 85462 (MIC=8 uM). Has antifungal activity against C.albicans (MIC=63 uM). Has hemolytic activity against rabbit erythrocytes. The chain is Nigrocin-2JDa from Odorrana jingdongensis (Jingdong frog).